A 266-amino-acid polypeptide reads, in one-letter code: Thymidylate synthase (266 aa).

Arg-24 serves as a coordination point for dUMP. A (6R)-5,10-methylene-5,6,7,8-tetrahydrofolate-binding site is contributed by His-54. Arg-129–Arg-130 contacts dUMP. Cys-149 functions as the Nucleophile in the catalytic mechanism. Residues Arg-169–Asp-172, Asn-180, and His-210–Tyr-212 contribute to the dUMP site. Asp-172 contacts (6R)-5,10-methylene-5,6,7,8-tetrahydrofolate. Ala-265 is a binding site for (6R)-5,10-methylene-5,6,7,8-tetrahydrofolate.

Belongs to the thymidylate synthase family. Bacterial-type ThyA subfamily. In terms of assembly, homodimer.

It is found in the cytoplasm. It catalyses the reaction dUMP + (6R)-5,10-methylene-5,6,7,8-tetrahydrofolate = 7,8-dihydrofolate + dTMP. Its pathway is pyrimidine metabolism; dTTP biosynthesis. Catalyzes the reductive methylation of 2'-deoxyuridine-5'-monophosphate (dUMP) to 2'-deoxythymidine-5'-monophosphate (dTMP) while utilizing 5,10-methylenetetrahydrofolate (mTHF) as the methyl donor and reductant in the reaction, yielding dihydrofolate (DHF) as a by-product. This enzymatic reaction provides an intracellular de novo source of dTMP, an essential precursor for DNA biosynthesis. In Mycolicibacterium smegmatis (strain ATCC 700084 / mc(2)155) (Mycobacterium smegmatis), this protein is Thymidylate synthase.